Reading from the N-terminus, the 139-residue chain is FAD synthase (139 aa).

Residues 8-9, 13-16, Asp-92, and Tyr-119 contribute to the ATP site; these read VF and HPGH.

The protein belongs to the archaeal FAD synthase family. Homodimer. A divalent metal cation is required as a cofactor.

It catalyses the reaction FMN + ATP + H(+) = FAD + diphosphate. It functions in the pathway cofactor biosynthesis; FAD biosynthesis; FAD from FMN: step 1/1. Catalyzes the transfer of the AMP portion of ATP to flavin mononucleotide (FMN) to produce flavin adenine dinucleotide (FAD) coenzyme. The chain is FAD synthase from Picrophilus torridus (strain ATCC 700027 / DSM 9790 / JCM 10055 / NBRC 100828 / KAW 2/3).